Consider the following 443-residue polypeptide: ATP-dependent protease ATPase subunit HslU (443 aa).

Residues Ile-18, Gly-60–Glu-65, Asp-256, Glu-321, and Arg-393 contribute to the ATP site.

It belongs to the ClpX chaperone family. HslU subfamily. A double ring-shaped homohexamer of HslV is capped on each side by a ring-shaped HslU homohexamer. The assembly of the HslU/HslV complex is dependent on binding of ATP.

The protein localises to the cytoplasm. Functionally, ATPase subunit of a proteasome-like degradation complex; this subunit has chaperone activity. The binding of ATP and its subsequent hydrolysis by HslU are essential for unfolding of protein substrates subsequently hydrolyzed by HslV. HslU recognizes the N-terminal part of its protein substrates and unfolds these before they are guided to HslV for hydrolysis. In Wigglesworthia glossinidia brevipalpis, this protein is ATP-dependent protease ATPase subunit HslU.